The primary structure comprises 688 residues: Collagen alpha-2(IX) chain (688 aa).

A signal peptide spans 1-22 (MTAVPAPRSLFVLLQVLWLALA). The segment at 26–162 (GPPGEPGPPG…PGKPGRPGTI (137 aa)) is triple-helical region 4 (COL4). The tract at residues 26 to 171 (GPPGEPGPPG…IQGLEGSADF (146 aa)) is disordered. 2 stretches are compositionally biased toward pro residues: residues 28 to 42 (PGEP…PPGV) and 105 to 126 (LPGP…PGPV). A compositionally biased stretch (low complexity) spans 128 to 137 (LPGEIGTPGP). The segment covering 138-156 (KGDPGPEGPSGPPGPPGKP) has biased composition (pro residues). Proline 159 is modified (4-hydroxyproline). Positions 163-179 (QGLEGSADFLCPTNCPA) are nonhelical region 4 (NC4). O-linked (Xyl...) (glycosaminoglycan) serine glycosylation occurs at serine 168. The interval 180–518 (GVKGPQGLQG…PGRQGVVGRA (339 aa)) is triple-helical region 3 (COL3). Lysine 182 is subject to 5-hydroxylysine. The O-linked (Gal...) hydroxylysine glycan is linked to lysine 182. The tract at residues 183 to 517 (GPQGLQGVKG…QPGRQGVVGR (335 aa)) is disordered. Composition is skewed to low complexity over residues 289 to 314 (PQGI…PGIP) and 392 to 412 (RGPV…EQGP). The segment covering 435-444 (GPRGGVGDPG) has biased composition (gly residues). The segment covering 502-517 (DRGVPGQPGRQGVVGR) has biased composition (low complexity). The segment at 519–548 (ASDQHIVDVVLKMIQEQLAEVAVSAKREAL) is nonhelical region 3 (NC3). A triple-helical region 2 (COL2) region spans residues 549-631 (GAAGMVGLPG…PGLPGRPGQA (83 aa)). Positions 553 to 664 (MVGLPGPPGP…GPVGLPGFCE (112 aa)) are disordered. Residues 598 to 610 (KRGEKGDRGEMGH) are compositionally biased toward basic and acidic residues. Residues 632–633 (IN) are nonhelical region 2 (NC2). The interval 634–663 (GKDGDRGSPGAPGEAGRPGRPGPVGLPGFC) is triple-helical region 1 (COL1). The tract at residues 664–688 (EPAACLGASAYTSARLTEPGSIKGP) is nonhelical region 1 (NC1).

Belongs to the fibril-associated collagens with interrupted helices (FACIT) family. In terms of assembly, heterotrimer of an alpha 1(IX), an alpha 2(IX) and an alpha 3(IX) chain. The chains are linked to each other by interchain disulfide bonds. Trimers are also cross-linked via hydroxylysines. Covalently linked to the telopeptides of type II collagen by lysine-derived cross-links. In terms of processing, prolines at the third position of the tripeptide repeating unit (G-X-Y) are hydroxylated in some or all of the chains.

The protein resides in the secreted. It localises to the extracellular space. Its subcellular location is the extracellular matrix. Structural component of hyaline cartilage and vitreous of the eye. This is Collagen alpha-2(IX) chain (Col9a2) from Mus musculus (Mouse).